The following is a 217-amino-acid chain: Ependymin (217 aa).

Positions 1 to 20 (MHTVKLLCVVFSCLCAIGWA) are cleaved as a signal peptide. Residues asparagine 73 and asparagine 96 are each glycosylated (N-linked (GlcNAc...) asparagine).

This sequence belongs to the ependymin family. As to quaternary structure, forms disulfide-linked dimers. In terms of processing, binds calcium through the terminal sialic acids. EPDs are synthesized in the meninx and secreted in the cerebrospinal fluid.

The protein localises to the secreted. Functionally, may play a role in neural plasticity. May be involved during axon regeneration. In Danio rerio (Zebrafish), this protein is Ependymin (epd).